Reading from the N-terminus, the 269-residue chain is 2-heptyl-3-hydroxy-4(1H)-quinolone dioxygenase (269 aa).

Histidine 97 contacts substrate. The active-site Proton donor/acceptor is the histidine 246.

This sequence belongs to the AB hydrolase superfamily. Monomer.

The enzyme catalyses 2-heptyl-3-hydroxy-4(1H)-quinolone + O2 = N-octanoylanthranilate + CO + H(+). Ring-cleaving dioxygenase involved in the degradation pathway of the Pseudomonas aeruginosa quorum sensing signal molecules HHQ (2-heptyl-4-quinolone) and PQS (2-heptyl-3-hydroxy-4(1H)-quinolone) to anthranilate. Catalyzes the cleavage of PQS to form N-octanoylanthranilate and carbon monoxide. Thus, leads to the inactivation of PQS that plays a central role in the regulation of virulence factor production by P.aeruginosa, thereby quenching the production of antimicrobials, which may contribute to the competitiveness of M.abscessus in presence of P.aeruginosa. In vitro, can also use other 2-alkyl-3-hydroxy-4(1H)-quinolone (AHQ) substrates with shorter alkyl substituents at C2, but with lower efficiency. This Mycobacteroides abscessus (strain ATCC 19977 / DSM 44196 / CCUG 20993 / CIP 104536 / JCM 13569 / NCTC 13031 / TMC 1543 / L948) (Mycobacterium abscessus) protein is 2-heptyl-3-hydroxy-4(1H)-quinolone dioxygenase.